The following is a 537-amino-acid chain: Sodium/hydrogen exchanger 9B2 (537 aa).

Basic and acidic residues predominate over residues 1 to 10 (MGDEDKRITY). A disordered region spans residues 1 to 33 (MGDEDKRITYEDSEPSTGMNYTPSMHQETQEET). Over 1 to 86 (MGDEDKRITY…ACPPHGLLDR (86 aa)) the chain is Cytoplasmic. A compositionally biased stretch (polar residues) spans 15–27 (PSTGMNYTPSMHQ). Ser-49 carries the post-translational modification Phosphoserine. Residues 87-104 (VVTNVTIIVLLWAVIWSI) form a helical membrane-spanning segment. At 105–113 (TGSECLPGG) the chain is on the extracellular side. The chain crosses the membrane as a helical span at residues 114–133 (NLFGIIILFYCAIIGGKLLG). The Cytoplasmic segment spans residues 134–144 (LIKLPTLPPLP). A helical membrane pass occupies residues 145 to 161 (SLLGMLLAGFLIRNIPV). Residues 162-171 (INDNVQIKHK) lie on the Extracellular side of the membrane. A helical membrane pass occupies residues 172 to 189 (WSSSLRSIALSIILVRAG). The Cytoplasmic portion of the chain corresponds to 190-200 (LGLDSKALKKL). A helical transmembrane segment spans residues 201 to 227 (KGVCVRLSMGPCIVEACTSALLAHYLL). Residues 228 to 233 (GLPWQW) are Extracellular-facing. Residues 234–242 (GFILGFVLG) traverse the membrane as a helical segment. The Cytoplasmic portion of the chain corresponds to 243–270 (AVSPAVVVPSMLLLQGGGYGVEKGVPTL). Na(+)-binding residues include Val-244, Gly-275, Asp-278, and Asp-279. A helical transmembrane segment spans residues 271–290 (LMAAGSFDDILAITGFNTCL). Over 291–300 (GIAFSTGSTV) the chain is Extracellular. Residues 301-324 (FNVLRGVLEVVIGVATGSVLGFFI) traverse the membrane as a helical segment. Topologically, residues 325-339 (QYFPSCDQDKLVCKR) are cytoplasmic. The chain crosses the membrane as a helical span at residues 340-357 (TFLVLGLSVLAVFSSVHF). At 358–361 (GFPG) the chain is on the extracellular side. The helical transmembrane segment at 362 to 373 (SGGLCTLVMAFL) threads the bilayer. Residues 374 to 390 (AGMGWTSEKAEVEKIIA) lie on the Cytoplasmic side of the membrane. The chain crosses the membrane as a helical span at residues 391–411 (VAWDIFQPLLFGLIGAEVSIA). Residues 412–417 (SLRPET) lie on the Extracellular side of the membrane. The helical transmembrane segment at 418–440 (VGLCVATVGIAVLIRILTTFLMV) threads the bilayer. Residues 441–461 (CFAGFNLKEKIFISFAWLPKA) lie on the Cytoplasmic side of the membrane. Residues 462–473 (TVQAAIGSVALD) form a helical membrane-spanning segment. Residues 474-486 (TARSHGEKQLEDY) are Extracellular-facing. A helical membrane pass occupies residues 487-509 (GMDVLTVAFLSILITAPIGSLLI). Over 510-537 (GLLGPRLLQKVEHQNKDEEVQGETSVQV) the chain is Cytoplasmic.

The protein belongs to the monovalent cation:proton antiporter 1 (CPA1) transporter (TC 2.A.36) family. Homodimer; dimerization is essential for SLC9B2 activity. Lipids seem to play a role in the stabilization of the dimerization subdomain.

It is found in the cell membrane. It localises to the mitochondrion membrane. The protein localises to the endosome membrane. Its subcellular location is the recycling endosome membrane. The protein resides in the cytoplasmic vesicle. It is found in the secretory vesicle. It localises to the synaptic vesicle membrane. The protein localises to the basolateral cell membrane. Its subcellular location is the apical cell membrane. The catalysed reaction is Li(+)(out) + H(+)(in) = Li(+)(in) + H(+)(out). The enzyme catalyses Li(+)(in) + Na(+)(out) = Li(+)(out) + Na(+)(in). It carries out the reaction Na(+)(in) + H(+)(out) = Na(+)(out) + H(+)(in). Allosterically inhibited by the N-terminal domain. Inhibited by phloretin. Electroneutral Na(+) Li(+)/H(+) antiporter that extrudes Na(+) or Li(+) in exchange for external protons across the membrane. Uses the proton gradient/membrane potential to extrude sodium. Contributes to the regulation of intracellular pH and sodium homeostasis. Also able to mediate Na(+)/Li(+) antiporter activity in kidney. May play a physiological role in renal tubular function and blood pressure homeostasis. Plays an important role for insulin secretion and clathrin-mediated endocytosis in beta-cells. Involved in sperm motility and fertility. It is controversial whether SLC9B2 plays a role in osteoclast differentiation or not. The polypeptide is Sodium/hydrogen exchanger 9B2 (SLC9B2) (Pongo abelii (Sumatran orangutan)).